The sequence spans 210 residues: Tetraspanin-31 (210 aa).

The Cytoplasmic portion of the chain corresponds to 1 to 12 (MVCGGFACSKNA). Residues 13–33 (LCALNVVYMLVGLLLIGVAAW) traverse the membrane as a helical segment. Residues 34-44 (AKGLGLVSSIH) lie on the Extracellular side of the membrane. A helical transmembrane segment spans residues 45 to 65 (IIGGVIAVGVFLLLIAVAGLV). The Cytoplasmic segment spans residues 66–72 (GAVNHHQ). Residues 73 to 93 (VLLFFYMIILGLVFIFQFGIS) form a helical membrane-spanning segment. At 94 to 173 (CSCLAINLSK…FLKHSDEALK (80 aa)) the chain is on the extracellular side. N100, N109, N117, and N134 each carry an N-linked (GlcNAc...) asparagine glycan. Residues 174–194 (ILGGVGLFFSFTEILGVWLAM) traverse the membrane as a helical segment. Residues 195–210 (RFRNQKDPRANPSAFL) are Cytoplasmic-facing.

This sequence belongs to the tetraspanin (TM4SF) family.

The protein localises to the membrane. The polypeptide is Tetraspanin-31 (TSPAN31) (Bos taurus (Bovine)).